The primary structure comprises 362 residues: GMP reductase (362 aa).

Residues 26-27 (SR), K78, 129-131 (DVA), and 180-181 (IG) each bind NADP(+). The K(+) site is built by G181, G183, and C186. The active-site Thioimidate intermediate is the C186. Residue T188 is the Proton donor/acceptor of the active site. Residue R189 coordinates K(+). Residues 219–221 (DGG), 242–243 (GG), 268–270 (GMS), and 286–290 (RASEG) contribute to the GMP site. NADP(+)-binding positions include M269, 285–286 (YR), and 314–317 (STCT).

The protein belongs to the IMPDH/GMPR family.

The enzyme catalyses IMP + NH4(+) + NADP(+) = GMP + NADPH + 2 H(+). Functionally, catalyzes the irreversible NADPH-dependent deamination of GMP to IMP. It functions in the conversion of nucleobase, nucleoside and nucleotide derivatives of G to A nucleotides, and in maintaining the intracellular balance of A and G nucleotides. In Phytophthora infestans (Potato late blight agent), this protein is GMP reductase.